The chain runs to 311 residues: 4-hydroxy-3-methylbut-2-enyl diphosphate reductase (311 aa).

C12 lines the [4Fe-4S] cluster pocket. Positions 43 and 81 each coordinate (2E)-4-hydroxy-3-methylbut-2-enyl diphosphate. Dimethylallyl diphosphate-binding residues include H43 and H81. The isopentenyl diphosphate site is built by H43 and H81. C103 lines the [4Fe-4S] cluster pocket. H131 serves as a coordination point for (2E)-4-hydroxy-3-methylbut-2-enyl diphosphate. H131 is a binding site for dimethylallyl diphosphate. Residue H131 coordinates isopentenyl diphosphate. The active-site Proton donor is the E133. T170 is a (2E)-4-hydroxy-3-methylbut-2-enyl diphosphate binding site. C198 serves as a coordination point for [4Fe-4S] cluster. (2E)-4-hydroxy-3-methylbut-2-enyl diphosphate-binding residues include S226, N228, and S271. S226, N228, and S271 together coordinate dimethylallyl diphosphate. Residues S226, N228, and S271 each coordinate isopentenyl diphosphate.

Belongs to the IspH family. Requires [4Fe-4S] cluster as cofactor.

The enzyme catalyses isopentenyl diphosphate + 2 oxidized [2Fe-2S]-[ferredoxin] + H2O = (2E)-4-hydroxy-3-methylbut-2-enyl diphosphate + 2 reduced [2Fe-2S]-[ferredoxin] + 2 H(+). The catalysed reaction is dimethylallyl diphosphate + 2 oxidized [2Fe-2S]-[ferredoxin] + H2O = (2E)-4-hydroxy-3-methylbut-2-enyl diphosphate + 2 reduced [2Fe-2S]-[ferredoxin] + 2 H(+). It functions in the pathway isoprenoid biosynthesis; dimethylallyl diphosphate biosynthesis; dimethylallyl diphosphate from (2E)-4-hydroxy-3-methylbutenyl diphosphate: step 1/1. The protein operates within isoprenoid biosynthesis; isopentenyl diphosphate biosynthesis via DXP pathway; isopentenyl diphosphate from 1-deoxy-D-xylulose 5-phosphate: step 6/6. Its function is as follows. Catalyzes the conversion of 1-hydroxy-2-methyl-2-(E)-butenyl 4-diphosphate (HMBPP) into a mixture of isopentenyl diphosphate (IPP) and dimethylallyl diphosphate (DMAPP). Acts in the terminal step of the DOXP/MEP pathway for isoprenoid precursor biosynthesis. The protein is 4-hydroxy-3-methylbut-2-enyl diphosphate reductase of Brevibacillus brevis (strain 47 / JCM 6285 / NBRC 100599).